The primary structure comprises 343 residues: Probable transposase for insertion sequence element (343 aa).

The protein belongs to the transposase mutator family.

Its function is as follows. Required for the transposition of the insertion element. The polypeptide is Probable transposase for insertion sequence element (Corynebacterium diphtheriae).